Reading from the N-terminus, the 575-residue chain is MGFRINTNVAALNAKANADLNSKSLDASLSRLSSGLRINSAADDASGMAIKDSLRSQANTLGQAISNGNDALGILQTADKAMDEQLKILDTIKTKATQAAQDGQSLKTRTMLQADINRLMEELDNIANTTSFNGKQLLSGNFINQEFQIGASSNQTVKASIGATQSSKIGLTRFETGSRISVGGEVQFTLKNYNGIDDFKFQKVVISTSVGTGLGALADEINKNADKTGVRATFTVETRGMGAVRAGATSDDFAINGVKIGKVDYKDGDANGALVSAINSVKDTTGVEASIDENGKLLLTSREGRGIKIEGNIGRGAFINPNMLENYGRLSLVKNDGKDILISGTNLSAIGFGTGNMISQASVSLRESKGQIDANVADAMGFNSANKGNILGGYSSVSAYMSSTGSGFSSGSGFSVGSGKNYSTGFANTIAISAASQLSAVYNVSAGSGFSSGSNLSQFATMKTSAGNTLGVKDETAGVTTLKGAMAVMDIAETAITNLDQIRADIGSVQNQVTSTINNITVTQVNVKAAESQIRDVDFAAESANYSKANILAQSGSYAMAQANSVQQNVLRLLQ.

3 consecutive repeat copies span residues 405-409 (GSGFS), 411-415 (GSGFS), and 447-450 (GSGF).

It belongs to the bacterial flagellin family. Heteromer of flaA and flaB.

The protein resides in the secreted. It is found in the bacterial flagellum. Flagellin is the subunit protein which polymerizes to form the filaments of bacterial flagella. The protein is Flagellin A (flaA) of Campylobacter jejuni.